The chain runs to 434 residues: Enolase (434 aa).

Residue glutamine 166 coordinates (2R)-2-phosphoglycerate. Glutamate 208 acts as the Proton donor in catalysis. Residues aspartate 245, glutamate 290, and aspartate 317 each contribute to the Mg(2+) site. (2R)-2-phosphoglycerate-binding residues include lysine 342, arginine 371, serine 372, and lysine 393. Lysine 342 acts as the Proton acceptor in catalysis.

It belongs to the enolase family. The cofactor is Mg(2+).

Its subcellular location is the cytoplasm. It is found in the secreted. It localises to the cell surface. It carries out the reaction (2R)-2-phosphoglycerate = phosphoenolpyruvate + H2O. It functions in the pathway carbohydrate degradation; glycolysis; pyruvate from D-glyceraldehyde 3-phosphate: step 4/5. Its function is as follows. Catalyzes the reversible conversion of 2-phosphoglycerate (2-PG) into phosphoenolpyruvate (PEP). It is essential for the degradation of carbohydrates via glycolysis. This Caldicellulosiruptor saccharolyticus (strain ATCC 43494 / DSM 8903 / Tp8T 6331) protein is Enolase.